We begin with the raw amino-acid sequence, 319 residues long: Acetyl-coenzyme A carboxylase carboxyl transferase subunit alpha (319 aa).

One can recognise a CoA carboxyltransferase C-terminal domain in the interval 32 to 293 (NIQEEISRLQ…HTALAEALQT (262 aa)).

This sequence belongs to the AccA family. As to quaternary structure, acetyl-CoA carboxylase is a heterohexamer composed of biotin carboxyl carrier protein (AccB), biotin carboxylase (AccC) and two subunits each of ACCase subunit alpha (AccA) and ACCase subunit beta (AccD).

It localises to the cytoplasm. It carries out the reaction N(6)-carboxybiotinyl-L-lysyl-[protein] + acetyl-CoA = N(6)-biotinyl-L-lysyl-[protein] + malonyl-CoA. The protein operates within lipid metabolism; malonyl-CoA biosynthesis; malonyl-CoA from acetyl-CoA: step 1/1. Its function is as follows. Component of the acetyl coenzyme A carboxylase (ACC) complex. First, biotin carboxylase catalyzes the carboxylation of biotin on its carrier protein (BCCP) and then the CO(2) group is transferred by the carboxyltransferase to acetyl-CoA to form malonyl-CoA. The chain is Acetyl-coenzyme A carboxylase carboxyl transferase subunit alpha from Thioalkalivibrio sulfidiphilus (strain HL-EbGR7).